We begin with the raw amino-acid sequence, 472 residues long: Meiotic spindle formation protein mei-1 (472 aa).

Residues 83–161 (HEAMTRQSGS…TQGILPQNSA (79 aa)) are disordered. Phosphoserine; by mbk-2 is present on S92. 2 stretches are compositionally biased toward polar residues: residues 134-143 (KSTSSMSTNP) and 150-161 (NPTQGILPQNSA). Residues 233 to 240 (GPPGTGKT) and 351 to 352 (RR) each bind ATP.

This sequence belongs to the AAA ATPase family. Katanin p60 subunit A1 subfamily. Homohexamer; ATP hydrolysis initiates a cycle between an open spiral and a closed ring conformation which is probably involved in pulling tubulin dimers out from microtubules. Interacts with mei-2, which may serve as a targeting subunit. Interacts with mel-26, which targets mei-1 for ubiquitin mediated proteolysis. Interacts with phosphatase pph-4.1. Post-translationally, phosphorylated. Phosphorylation by mbk-2 is required for its rapid degradation following meiosis II. Likely dephosphorylated by the PP4 complex composed of catalytic subunit pph-4.1 and regulatory subunit ppfr-1. Polyubiquitination targets the protein for rapid degradation via the ubiquitin system at the end of meiosis. The BTB domain protein mel-26 may serve to specifically target mei-1 for ubiquitination by cul-3 containing complexes. The cul-3 protein is in turn regulated by neddylation by ned-8.

Its subcellular location is the cytoplasm. It is found in the cytoskeleton. It localises to the spindle pole. The protein resides in the chromosome. It carries out the reaction n ATP + n H2O + a microtubule = n ADP + n phosphate + (n+1) alpha/beta tubulin heterodimers.. With respect to regulation, ATPase activity is stimulated by microtubules, which promote homooligomerization. ATP-dependent microtubule severing is stimulated by interaction with mei-2. In terms of biological role, catalytic subunit of a complex which severs microtubules in an ATP-dependent manner. Microtubule severing may promote rapid reorganization of cellular microtubule arrays. Required specifically for meiotic spindle formation in the female germline; the presence of this protein is inimical to the formation of mitotic spindles. In body wall muscles, regulates organization of myosin thick filaments. The polypeptide is Meiotic spindle formation protein mei-1 (Caenorhabditis elegans).